A 285-amino-acid chain; its full sequence is 4-diphosphocytidyl-2-C-methyl-D-erythritol kinase (285 aa).

The active site involves Lys-12. Residue 95 to 105 (PVGAGLAGGST) coordinates ATP. Residue Asp-137 is part of the active site.

This sequence belongs to the GHMP kinase family. IspE subfamily.

The enzyme catalyses 4-CDP-2-C-methyl-D-erythritol + ATP = 4-CDP-2-C-methyl-D-erythritol 2-phosphate + ADP + H(+). Its pathway is isoprenoid biosynthesis; isopentenyl diphosphate biosynthesis via DXP pathway; isopentenyl diphosphate from 1-deoxy-D-xylulose 5-phosphate: step 3/6. Its function is as follows. Catalyzes the phosphorylation of the position 2 hydroxy group of 4-diphosphocytidyl-2C-methyl-D-erythritol. This Syntrophomonas wolfei subsp. wolfei (strain DSM 2245B / Goettingen) protein is 4-diphosphocytidyl-2-C-methyl-D-erythritol kinase.